A 367-amino-acid chain; its full sequence is Peptide chain release factor 2 (367 aa).

At Gln-254 the chain carries N5-methylglutamine.

The protein belongs to the prokaryotic/mitochondrial release factor family. In terms of processing, methylated by PrmC. Methylation increases the termination efficiency of RF2.

The protein localises to the cytoplasm. Its function is as follows. Peptide chain release factor 2 directs the termination of translation in response to the peptide chain termination codons UGA and UAA. In Leptospira borgpetersenii serovar Hardjo-bovis (strain JB197), this protein is Peptide chain release factor 2.